A 123-amino-acid polypeptide reads, in one-letter code: UPF0102 protein PFL_5073 (123 aa).

It belongs to the UPF0102 family.

This Pseudomonas fluorescens (strain ATCC BAA-477 / NRRL B-23932 / Pf-5) protein is UPF0102 protein PFL_5073.